The following is a 182-amino-acid chain: Small ribosomal subunit protein uS5 (182 aa).

The S5 DRBM domain occupies 16–79; it reads FVDRLVHINR…ESAKRGMIYV (64 aa).

It belongs to the universal ribosomal protein uS5 family. Part of the 30S ribosomal subunit. Contacts proteins S4 and S8.

With S4 and S12 plays an important role in translational accuracy. Its function is as follows. Located at the back of the 30S subunit body where it stabilizes the conformation of the head with respect to the body. The sequence is that of Small ribosomal subunit protein uS5 from Bartonella tribocorum (strain CIP 105476 / IBS 506).